The following is a 332-amino-acid chain: Delta-aminolevulinic acid dehydratase (332 aa).

The active-site Schiff-base intermediate with substrate is the Lys-202. 2 residues coordinate 5-aminolevulinate: Arg-212 and Lys-225. Lys-256 (schiff-base intermediate with substrate) is an active-site residue. 5-aminolevulinate-binding residues include Ser-282 and Tyr-321.

Belongs to the ALAD family. As to quaternary structure, homohexamer.

It catalyses the reaction 2 5-aminolevulinate = porphobilinogen + 2 H2O + H(+). The protein operates within porphyrin-containing compound metabolism; protoporphyrin-IX biosynthesis; coproporphyrinogen-III from 5-aminolevulinate: step 1/4. In terms of biological role, catalyzes an early step in the biosynthesis of tetrapyrroles. Binds two molecules of 5-aminolevulinate per subunit, each at a distinct site, and catalyzes their condensation to form porphobilinogen. The polypeptide is Delta-aminolevulinic acid dehydratase (hemB) (Rhodobacter capsulatus (Rhodopseudomonas capsulata)).